An 868-amino-acid chain; its full sequence is mRNA-capping enzyme (868 aa).

Lysine 282 serves as the catalytic N6-GMP-lysine intermediate. The 275-residue stretch at 594–868 folds into the mRNA cap 0 methyltransferase domain; sequence GIYRAQTALI…LFGFICLRKN (275 aa). S-adenosyl-L-methionine is bound by residues lysine 607, glycine 624, aspartate 646, and 710 to 712; that span reads LFI.

This sequence in the N-terminal section; belongs to the dsDNA virus mRNA guanylyltransferase family. In the C-terminal section; belongs to the class I-like SAM-binding methyltransferase superfamily. mRNA cap 0 methyltransferase family. As to quaternary structure, part of the viral DNA-directed RNA polymerase that consists of 8 polII-like subunits (RPB1, RPB2, RPB3, RPB5, RPB6, RPB7, RPB9, RPB10), a capping enzyme and a termination factor.

Its subcellular location is the virion. It carries out the reaction a 5'-end triphospho-ribonucleoside in mRNA + H2O = a 5'-end diphospho-ribonucleoside in mRNA + phosphate + H(+). The enzyme catalyses a 5'-end diphospho-ribonucleoside in mRNA + GTP + H(+) = a 5'-end (5'-triphosphoguanosine)-ribonucleoside in mRNA + diphosphate. It catalyses the reaction a 5'-end (5'-triphosphoguanosine)-ribonucleoside in mRNA + S-adenosyl-L-methionine = a 5'-end (N(7)-methyl 5'-triphosphoguanosine)-ribonucleoside in mRNA + S-adenosyl-L-homocysteine. The protein operates within mRNA processing; mRNA capping. Probably catalyzes the second reaction in the mRNA cap formation pathway. Forms a covalent complex with GTP. In African swine fever virus (isolate Tick/South Africa/Pretoriuskop Pr4/1996) (ASFV), this protein is mRNA-capping enzyme.